The following is a 311-amino-acid chain: Cytosolic Fe-S cluster assembly factor Nubp1 homolog (311 aa).

Residues C9, C23, C26, and C32 each coordinate [4Fe-4S] cluster. Residue 63 to 70 (GKGGVGKS) participates in ATP binding. Positions 240 and 243 each coordinate [4Fe-4S] cluster.

This sequence belongs to the Mrp/NBP35 ATP-binding proteins family. NUBP1/NBP35 subfamily. Heterotetramer of 2 Nubp1 and 2 Nubp2 chains. It depends on [4Fe-4S] cluster as a cofactor.

Its subcellular location is the cytoplasm. Functionally, component of the cytosolic iron-sulfur (Fe/S) protein assembly (CIA) machinery. Required for maturation of extramitochondrial Fe-S proteins. The Nubp1-Nubp2 heterotetramer forms a Fe-S scaffold complex, mediating the de novo assembly of an Fe-S cluster and its transfer to target apoproteins. In Drosophila pseudoobscura pseudoobscura (Fruit fly), this protein is Cytosolic Fe-S cluster assembly factor Nubp1 homolog.